Reading from the N-terminus, the 342-residue chain is Isopentenyl-diphosphate delta-isomerase (342 aa).

Residue 11–12 (RK) coordinates substrate. FMN contacts are provided by residues Ser-68, 69–71 (SMT), Ser-99, and Asn-127. A substrate-binding site is contributed by 99 to 101 (SMR). Gln-162 serves as a coordination point for substrate. Glu-163 is a Mg(2+) binding site. FMN is bound by residues Lys-194, Thr-224, 274–276 (GLK), and 295–296 (AG).

The protein belongs to the IPP isomerase type 2 family. In terms of assembly, homooctamer. Dimer of tetramers. It depends on FMN as a cofactor. Requires NADPH as cofactor. The cofactor is Mg(2+).

The protein resides in the cytoplasm. The enzyme catalyses isopentenyl diphosphate = dimethylallyl diphosphate. Functionally, involved in the biosynthesis of isoprenoids. Catalyzes the 1,3-allylic rearrangement of the homoallylic substrate isopentenyl (IPP) to its allylic isomer, dimethylallyl diphosphate (DMAPP). This Rickettsia canadensis (strain McKiel) protein is Isopentenyl-diphosphate delta-isomerase.